Reading from the N-terminus, the 298-residue chain is tRNA pseudouridine synthase B (298 aa).

The Nucleophile role is filled by D42.

It belongs to the pseudouridine synthase TruB family. Type 1 subfamily.

The enzyme catalyses uridine(55) in tRNA = pseudouridine(55) in tRNA. Responsible for synthesis of pseudouridine from uracil-55 in the psi GC loop of transfer RNAs. This Mycobacterium tuberculosis (strain CDC 1551 / Oshkosh) protein is tRNA pseudouridine synthase B.